A 49-amino-acid polypeptide reads, in one-letter code: uncharacterized protein (49 aa).

An N-terminal signal peptide occupies residues 1–22; sequence MKLNAFHLVVVVLIVSIFSVSS.

It is found in the secreted. This is an uncharacterized protein from Dictyostelium discoideum (Social amoeba).